We begin with the raw amino-acid sequence, 172 residues long: Putative phosphoesterase BC_1225 (172 aa).

His34 acts as the Proton donor in catalysis. 2 short sequence motifs (HXTX) span residues 34–37 (HITL) and 115–118 (HLTI). His115 serves as the catalytic Proton acceptor.

It belongs to the 2H phosphoesterase superfamily. YjcG family.

This Bacillus cereus (strain ATCC 14579 / DSM 31 / CCUG 7414 / JCM 2152 / NBRC 15305 / NCIMB 9373 / NCTC 2599 / NRRL B-3711) protein is Putative phosphoesterase BC_1225.